A 316-amino-acid polypeptide reads, in one-letter code: 4-hydroxy-3-methylbut-2-enyl diphosphate reductase (316 aa).

Cys12 provides a ligand contact to [4Fe-4S] cluster. Residues His41 and His74 each contribute to the (2E)-4-hydroxy-3-methylbut-2-enyl diphosphate site. Positions 41 and 74 each coordinate dimethylallyl diphosphate. His41 and His74 together coordinate isopentenyl diphosphate. Cys96 contributes to the [4Fe-4S] cluster binding site. His124 is a binding site for (2E)-4-hydroxy-3-methylbut-2-enyl diphosphate. His124 provides a ligand contact to dimethylallyl diphosphate. His124 is an isopentenyl diphosphate binding site. Glu126 functions as the Proton donor in the catalytic mechanism. Thr169 contacts (2E)-4-hydroxy-3-methylbut-2-enyl diphosphate. Cys199 is a [4Fe-4S] cluster binding site. (2E)-4-hydroxy-3-methylbut-2-enyl diphosphate contacts are provided by Ser227, Ser228, Asn229, and Ser271. Dimethylallyl diphosphate is bound by residues Ser227, Ser228, Asn229, and Ser271. Isopentenyl diphosphate is bound by residues Ser227, Ser228, Asn229, and Ser271.

It belongs to the IspH family. Requires [4Fe-4S] cluster as cofactor.

The catalysed reaction is isopentenyl diphosphate + 2 oxidized [2Fe-2S]-[ferredoxin] + H2O = (2E)-4-hydroxy-3-methylbut-2-enyl diphosphate + 2 reduced [2Fe-2S]-[ferredoxin] + 2 H(+). The enzyme catalyses dimethylallyl diphosphate + 2 oxidized [2Fe-2S]-[ferredoxin] + H2O = (2E)-4-hydroxy-3-methylbut-2-enyl diphosphate + 2 reduced [2Fe-2S]-[ferredoxin] + 2 H(+). It participates in isoprenoid biosynthesis; dimethylallyl diphosphate biosynthesis; dimethylallyl diphosphate from (2E)-4-hydroxy-3-methylbutenyl diphosphate: step 1/1. It functions in the pathway isoprenoid biosynthesis; isopentenyl diphosphate biosynthesis via DXP pathway; isopentenyl diphosphate from 1-deoxy-D-xylulose 5-phosphate: step 6/6. Functionally, catalyzes the conversion of 1-hydroxy-2-methyl-2-(E)-butenyl 4-diphosphate (HMBPP) into a mixture of isopentenyl diphosphate (IPP) and dimethylallyl diphosphate (DMAPP). Acts in the terminal step of the DOXP/MEP pathway for isoprenoid precursor biosynthesis. This Xanthomonas axonopodis pv. citri (strain 306) protein is 4-hydroxy-3-methylbut-2-enyl diphosphate reductase.